A 232-amino-acid polypeptide reads, in one-letter code: uncharacterized protein (232 aa).

The tract at residues 1–71 is disordered; the sequence is MSNPTIEGDE…KENERIKNDD (71 aa). Residues 25-38 are compositionally biased toward acidic residues; it reads DDLDDLDDILDDLD. Residues 44–71 show a composition bias toward basic and acidic residues; it reads KNEEKKNIDEHKQTGNTSKENERIKNDD.

This is an uncharacterized protein from Schizosaccharomyces pombe (strain 972 / ATCC 24843) (Fission yeast).